A 351-amino-acid polypeptide reads, in one-letter code: Photosystem II D2 protein (351 aa).

The chain crosses the membrane as a helical span at residues 39 to 59 (TAYLAVGGWMTGTTFVTSWYT). Position 116 (H116) interacts with chlorophyll a. The chain crosses the membrane as a helical span at residues 123 to 139 (GFCLRQFEIARLVGIRP). Residues Q128 and N141 each contribute to the pheophytin a site. Residues 151-164 (VFVSVFLLYPLGQA) form a helical membrane-spanning segment. Chlorophyll a is bound at residue H196. A helical membrane pass occupies residues 206 to 226 (GALLCAIHGATVENTLFEDGD). 2 residues coordinate a plastoquinone: H213 and F260. H213 provides a ligand contact to Fe cation. H267 lines the Fe cation pocket. Residues 277 to 293 (GLWTSAIGIVGLALNLR) traverse the membrane as a helical segment.

The protein belongs to the reaction center PufL/M/PsbA/D family. In terms of assembly, PSII is composed of 1 copy each of membrane proteins PsbA, PsbB, PsbC, PsbD, PsbE, PsbF, PsbH, PsbI, PsbJ, PsbK, PsbL, PsbM, PsbT, PsbX, PsbY, PsbZ, Psb30/Ycf12, at least 3 peripheral proteins of the oxygen-evolving complex and a large number of cofactors. It forms dimeric complexes. The cofactor is The D1/D2 heterodimer binds P680, chlorophylls that are the primary electron donor of PSII, and subsequent electron acceptors. It shares a non-heme iron and each subunit binds pheophytin, quinone, additional chlorophylls, carotenoids and lipids. There is also a Cl(-1) ion associated with D1 and D2, which is required for oxygen evolution. The PSII complex binds additional chlorophylls, carotenoids and specific lipids..

Its subcellular location is the plastid. The protein resides in the chloroplast thylakoid membrane. The catalysed reaction is 2 a plastoquinone + 4 hnu + 2 H2O = 2 a plastoquinol + O2. In terms of biological role, photosystem II (PSII) is a light-driven water:plastoquinone oxidoreductase that uses light energy to abstract electrons from H(2)O, generating O(2) and a proton gradient subsequently used for ATP formation. It consists of a core antenna complex that captures photons, and an electron transfer chain that converts photonic excitation into a charge separation. The D1/D2 (PsbA/PsbD) reaction center heterodimer binds P680, the primary electron donor of PSII as well as several subsequent electron acceptors. D2 is needed for assembly of a stable PSII complex. The chain is Photosystem II D2 protein from Phaeodactylum tricornutum (strain CCAP 1055/1).